We begin with the raw amino-acid sequence, 96 residues long: Large ribosomal subunit protein bL28 (96 aa).

The disordered stretch occupies residues 1-22 (MSRRCELTGKGPMTGNNVSHAN).

The protein belongs to the bacterial ribosomal protein bL28 family.

The sequence is that of Large ribosomal subunit protein bL28 from Ruegeria sp. (strain TM1040) (Silicibacter sp.).